Reading from the N-terminus, the 420-residue chain is Light-independent protochlorophyllide reductase subunit N (420 aa).

[4Fe-4S] cluster is bound by residues cysteine 21, cysteine 46, and cysteine 103.

The protein belongs to the BchN/ChlN family. In terms of assembly, protochlorophyllide reductase is composed of three subunits; BchL, BchN and BchB. Forms a heterotetramer of two BchB and two BchN subunits. It depends on [4Fe-4S] cluster as a cofactor.

The enzyme catalyses chlorophyllide a + oxidized 2[4Fe-4S]-[ferredoxin] + 2 ADP + 2 phosphate = protochlorophyllide a + reduced 2[4Fe-4S]-[ferredoxin] + 2 ATP + 2 H2O. It functions in the pathway porphyrin-containing compound metabolism; bacteriochlorophyll biosynthesis (light-independent). Its function is as follows. Component of the dark-operative protochlorophyllide reductase (DPOR) that uses Mg-ATP and reduced ferredoxin to reduce ring D of protochlorophyllide (Pchlide) to form chlorophyllide a (Chlide). This reaction is light-independent. The NB-protein (BchN-BchB) is the catalytic component of the complex. This is Light-independent protochlorophyllide reductase subunit N from Chlorobium phaeobacteroides (strain DSM 266 / SMG 266 / 2430).